Consider the following 297-residue polypeptide: Bifunctional protein FolD 1 (297 aa).

NADP(+) contacts are provided by residues 164 to 166 (GRS), S193, and I234.

The protein belongs to the tetrahydrofolate dehydrogenase/cyclohydrolase family. In terms of assembly, homodimer.

It carries out the reaction (6R)-5,10-methylene-5,6,7,8-tetrahydrofolate + NADP(+) = (6R)-5,10-methenyltetrahydrofolate + NADPH. The enzyme catalyses (6R)-5,10-methenyltetrahydrofolate + H2O = (6R)-10-formyltetrahydrofolate + H(+). The protein operates within one-carbon metabolism; tetrahydrofolate interconversion. Functionally, catalyzes the oxidation of 5,10-methylenetetrahydrofolate to 5,10-methenyltetrahydrofolate and then the hydrolysis of 5,10-methenyltetrahydrofolate to 10-formyltetrahydrofolate. The chain is Bifunctional protein FolD 1 from Haloarcula marismortui (strain ATCC 43049 / DSM 3752 / JCM 8966 / VKM B-1809) (Halobacterium marismortui).